We begin with the raw amino-acid sequence, 280 residues long: 4-deoxy-L-threo-5-hexosulose-uronate ketol-isomerase 1 (280 aa).

The Zn(2+) site is built by histidine 198, histidine 200, glutamate 205, and histidine 247.

This sequence belongs to the KduI family. It depends on Zn(2+) as a cofactor.

The enzyme catalyses 5-dehydro-4-deoxy-D-glucuronate = 3-deoxy-D-glycero-2,5-hexodiulosonate. The protein operates within glycan metabolism; pectin degradation; 2-dehydro-3-deoxy-D-gluconate from pectin: step 4/5. Functionally, catalyzes the isomerization of 5-dehydro-4-deoxy-D-glucuronate to 3-deoxy-D-glycero-2,5-hexodiulosonate. The polypeptide is 4-deoxy-L-threo-5-hexosulose-uronate ketol-isomerase 1 (kduI1) (Rhizobium meliloti (strain 1021) (Ensifer meliloti)).